The primary structure comprises 346 residues: Methylthioribose-1-phosphate isomerase (346 aa).

Substrate is bound by residues Arg-48 to Ala-50, Arg-91, and Gln-196. Catalysis depends on Asp-237, which acts as the Proton donor. Asn-247 to Lys-248 is a substrate binding site.

This sequence belongs to the eIF-2B alpha/beta/delta subunits family. MtnA subfamily.

The enzyme catalyses 5-(methylsulfanyl)-alpha-D-ribose 1-phosphate = 5-(methylsulfanyl)-D-ribulose 1-phosphate. It participates in amino-acid biosynthesis; L-methionine biosynthesis via salvage pathway; L-methionine from S-methyl-5-thio-alpha-D-ribose 1-phosphate: step 1/6. Functionally, catalyzes the interconversion of methylthioribose-1-phosphate (MTR-1-P) into methylthioribulose-1-phosphate (MTRu-1-P). In Thermosipho melanesiensis (strain DSM 12029 / CIP 104789 / BI429), this protein is Methylthioribose-1-phosphate isomerase.